Here is a 614-residue protein sequence, read N- to C-terminus: Threonine--tRNA ligase (614 aa).

The interval 1-141 (MRLLLIHSDY…LSKTIVPGEE (141 aa)) is editing domain. The catalytic stretch occupies residues 198-490 (AHVDLMRSKE…ISTQKVPALP (293 aa)). Residues C290, H342, and H463 each coordinate Zn(2+).

Belongs to the class-II aminoacyl-tRNA synthetase family. Homodimer. Zn(2+) serves as cofactor.

The protein localises to the cytoplasm. The catalysed reaction is tRNA(Thr) + L-threonine + ATP = L-threonyl-tRNA(Thr) + AMP + diphosphate + H(+). In terms of biological role, catalyzes the attachment of threonine to tRNA(Thr) in a two-step reaction: L-threonine is first activated by ATP to form Thr-AMP and then transferred to the acceptor end of tRNA(Thr). Also edits incorrectly charged L-seryl-tRNA(Thr). The polypeptide is Threonine--tRNA ligase (Methanoregula boonei (strain DSM 21154 / JCM 14090 / 6A8)).